Consider the following 440-residue polypeptide: Kinetochore protein NUF2 homolog (440 aa).

2 coiled-coil regions span residues 142-239 and 299-386; these read LGLL…LRSQ and INEQ…RQTN.

This sequence belongs to the NUF2 family. In terms of assembly, component of the NDC80 complex, which consists of NDC80, NUF2, SPC24 and SPC25.

The protein resides in the chromosome. The protein localises to the centromere. Acts as a component of the essential kinetochore-associated NDC80 complex, which is required for chromosome segregation and spindle checkpoint activity to ensure proper cell division. The chain is Kinetochore protein NUF2 homolog from Arabidopsis thaliana (Mouse-ear cress).